A 124-amino-acid chain; its full sequence is Fluoride-specific ion channel FluC (124 aa).

A run of 4 helical transmembrane segments spans residues 3–23 (IIAIAVGAAIGANLRYSLSIW), 34–54 (YGTLIVNVIGSFAIGFVLVLA), 66–86 (LLIVTGLLGGFTTFSSLSFET), and 100–120 (LYVLSSFGLGIAGVFLGAGVA). The Na(+) site is built by Gly74 and Thr77.

The protein belongs to the fluoride channel Fluc/FEX (TC 1.A.43) family.

Its subcellular location is the cell membrane. The enzyme catalyses fluoride(in) = fluoride(out). Its activity is regulated as follows. Na(+) is not transported, but it plays an essential structural role and its presence is essential for fluoride channel function. Functionally, fluoride-specific ion channel. Important for reducing fluoride concentration in the cell, thus reducing its toxicity. The polypeptide is Fluoride-specific ion channel FluC (Roseiflexus sp. (strain RS-1)).